Consider the following 490-residue polypeptide: Ribulose bisphosphate carboxylase large chain (490 aa).

Residues asparagine 127 and threonine 177 each contribute to the substrate site. The active-site Proton acceptor is the lysine 179. Lysine 181 contributes to the substrate binding site. Mg(2+) contacts are provided by lysine 205, aspartate 207, and glutamate 208. Lysine 205 carries the post-translational modification N6-carboxylysine. Histidine 297 acts as the Proton acceptor in catalysis. Residues arginine 298, histidine 330, and serine 382 each coordinate substrate.

The protein belongs to the RuBisCO large chain family. Type I subfamily. As to quaternary structure, heterohexadecamer of 8 large chains and 8 small chains. Requires Mg(2+) as cofactor.

The protein resides in the plastid. It is found in the chloroplast. The catalysed reaction is 2 (2R)-3-phosphoglycerate + 2 H(+) = D-ribulose 1,5-bisphosphate + CO2 + H2O. The enzyme catalyses D-ribulose 1,5-bisphosphate + O2 = 2-phosphoglycolate + (2R)-3-phosphoglycerate + 2 H(+). Functionally, ruBisCO catalyzes two reactions: the carboxylation of D-ribulose 1,5-bisphosphate, the primary event in carbon dioxide fixation, as well as the oxidative fragmentation of the pentose substrate in the photorespiration process. Both reactions occur simultaneously and in competition at the same active site. The protein is Ribulose bisphosphate carboxylase large chain of Phaeodactylum tricornutum (strain CCAP 1055/1).